The chain runs to 398 residues: Metallophosphoesterase 1 (398 aa).

A helical transmembrane segment spans residues 25-45 (VCFVSSVLIFCEFFIYYLVIF). A divalent metal cation contacts are provided by Asp-75, Asp-117, Asn-155, His-251, His-305, and His-307. Residues 359-379 (VFAIYWAAGALLVVLVLAHFQ) traverse the membrane as a helical segment. The short motif at 394–398 (KHKAA) is the Di-lysine motif element.

Belongs to the metallophosphoesterase superfamily. MPPE1 family. The cofactor is Mn(2+).

The protein resides in the endoplasmic reticulum-Golgi intermediate compartment membrane. In terms of biological role, metallophosphoesterase that catalyzes the removal of a side-chain ethanolamine-phosphate (EtNP) from the second mannose of the GPI-anchor protein intermediate. Participates in the glycan remodeling steps of GPI-anchor maturation to allow an efficient transport of GPI-anchor proteins from the endoplasmic reticulum to the Golgi. This is Metallophosphoesterase 1 from Gallus gallus (Chicken).